We begin with the raw amino-acid sequence, 454 residues long: MKTIIEPFRIKSVEPIRMTTREERARLLEAAGFNLFKLHSDDVIIDLLTDSGTSAMSAAQWGAVMTGDESYAGAPSFYRFEAAVKDLMDFTHIIPAHQGRAAEHLLFSLIAKTGDLIPSNTHFDTTRGNIEAMGAEALDLPIAEGRVPSLDHPFKGNMDLAALERVLTEEGGRIPAVMMTITNNAGGGQPVSLENIRGAARLAKAHGKAFYIDGCRFAENAWFIKLREEGQKDRSIKEIVRETFALADGMTMSAKKDAFANIGGWLALNNDALAERARTLLIQTEGFPTYGGLAGRDLDAIAQGLKEIIDEDYLRYRVRTNAYIAERLDAMGVPVVKPAGGHAVFIDARAFLPHIPPLEYPGQALTCAMYETGGIRACEIGTVMFGRKPDGTEAPGAMDLVRLAMPRRVYTQSHADYVVEVLEDVAATKDTLKGLRIVKEPPMMRHFTAAFERL.

Lys-256 is modified (N6-(pyridoxal phosphate)lysine).

The protein belongs to the beta-eliminating lyase family. Homotetramer. Pyridoxal 5'-phosphate is required as a cofactor.

The catalysed reaction is L-tryptophan + H2O = indole + pyruvate + NH4(+). Its pathway is amino-acid degradation; L-tryptophan degradation via pyruvate pathway; indole and pyruvate from L-tryptophan: step 1/1. This Hyphomonas neptunium (strain ATCC 15444) protein is Tryptophanase.